Reading from the N-terminus, the 545-residue chain is MESQRNILLIGLLFVSFLLWQQWQADKAPQPVAAAQTQSSIPASTVADAHSSDVPDADSAVPEATPASKELITVITDQLEIKIDPVGGDIVYSALLSHKLEEKGDDPFVLLEQTNDIYYIAQSGLIGRDGIDSSVKGRAHFDSASREYKLADGQETLNVPLTYVSDKGVAYTKVFVFTRGKYNIAVDYKINNTSDAQLQVQMYGQIKHSIKKSESSMMMPTYRGGAFSTADTRYEKYSFDDMADKNLDKSTLGGWVAMLQHYFVSAWVPPANDKNIIFSSVSAGGLANIGFRGALYDIAPGTEQSIKAEFYVGPKDQEALSALSPSLNLVVDYGFLWWLAVPIYKLLMFFQSIVGNWGIAIILITLTVRGMLYPLTKAQYTSMAKMRNLQPKLAELKERFGDDRQKMGQAMMELYKKEKVNPMGGCLPILLQMPIFIALYWVLLESVELRHAPFMLWITDLSVQDPYYVMPILMGISMFVMQKMQPMAPTMDPMQVKMMQWMPVIFTVFFLWFPAGLVLYWLVGNLVAITQQKIIYAGLEKKGLK.

The helical transmembrane segment at 6-26 threads the bilayer; the sequence is NILLIGLLFVSFLLWQQWQAD. The segment at 44–65 is disordered; the sequence is STVADAHSSDVPDADSAVPEAT. The next 4 helical transmembrane spans lie at 346–366, 424–444, 461–481, and 504–524; these read LLMF…LITL, GGCL…WVLL, LSVQ…MFVM, and VIFT…WLVG.

This sequence belongs to the OXA1/ALB3/YidC family. Type 1 subfamily. Interacts with the Sec translocase complex via SecD. Specifically interacts with transmembrane segments of nascent integral membrane proteins during membrane integration.

Its subcellular location is the cell inner membrane. In terms of biological role, required for the insertion and/or proper folding and/or complex formation of integral membrane proteins into the membrane. Involved in integration of membrane proteins that insert both dependently and independently of the Sec translocase complex, as well as at least some lipoproteins. Aids folding of multispanning membrane proteins. This chain is Membrane protein insertase YidC, found in Shewanella pealeana (strain ATCC 700345 / ANG-SQ1).